A 201-amino-acid polypeptide reads, in one-letter code: Ras-related protein Rab-9B (201 aa).

Val18, Gly19, Lys20, Ser21, Ser22, Asp33, Ser34, Ala36, His38, and Thr39 together coordinate GTP. Residue Ser21 coordinates Mg(2+). A Switch 1 motif is present at residues 31–42 (KFDSQAFHTIGV). Ser34 is subject to Phosphoserine. The Mg(2+) site is built by Thr39 and Asp62. A Switch 2 motif is present at residues 64 to 78 (AGQERFKSLRTPFYR). GTP is bound by residues Gly65, Asn124, Lys125, Ala155, and Lys156. S-geranylgeranyl cysteine attachment occurs at residues Cys200 and Cys201.

Belongs to the small GTPase superfamily. Rab family. As to quaternary structure, interacts (GTP-bound form) with SGSM1; the GDP-bound form has much lower affinity for SGSM1. The GTP-bound form but not the GDP-bound form interacts with HPS4 and the BLOC-3 complex (heterodimer of HPS1 and HPS4) but does not interact with HPS1 alone. Interacts (GTP-bound form) with NDE1. It depends on Mg(2+) as a cofactor.

The protein resides in the cell membrane. Its subcellular location is the cytoplasmic vesicle. It is found in the phagosome membrane. It catalyses the reaction GTP + H2O = GDP + phosphate + H(+). With respect to regulation, regulated by guanine nucleotide exchange factors (GEFs) which promote the exchange of bound GDP for free GTP. Regulated by GTPase activating proteins (GAPs) which increase the GTP hydrolysis activity. Inhibited by GDP dissociation inhibitors (GDIs). Functionally, the small GTPases Rab are key regulators of intracellular membrane trafficking, from the formation of transport vesicles to their fusion with membranes. Rabs cycle between an inactive GDP-bound form and an active GTP-bound form that is able to recruit to membranes different sets of downstream effectors directly responsible for vesicle formation, movement, tethering and fusion. RAB9B is involved in the transport of proteins between the endosomes and the trans Golgi network. May use NDE1/NDEL1 as an effector to interact with the dynein motor complex in order to control retrograde trafficking of RAB9-associated late endosomes to the TGN. In Pongo abelii (Sumatran orangutan), this protein is Ras-related protein Rab-9B (RAB9B).